The primary structure comprises 286 residues: Acetylglutamate kinase (286 aa).

Substrate contacts are provided by residues 70-71, Arg-92, and Asn-184; that span reads GG.

It belongs to the acetylglutamate kinase family. ArgB subfamily.

It is found in the cytoplasm. It carries out the reaction N-acetyl-L-glutamate + ATP = N-acetyl-L-glutamyl 5-phosphate + ADP. It participates in amino-acid biosynthesis; L-arginine biosynthesis; N(2)-acetyl-L-ornithine from L-glutamate: step 2/4. Functionally, catalyzes the ATP-dependent phosphorylation of N-acetyl-L-glutamate. In Ruegeria sp. (strain TM1040) (Silicibacter sp.), this protein is Acetylglutamate kinase.